A 393-amino-acid chain; its full sequence is NAD(P)H-quinone oxidoreductase subunit H, chloroplastic (393 aa).

Belongs to the complex I 49 kDa subunit family. In terms of assembly, NDH is composed of at least 16 different subunits, 5 of which are encoded in the nucleus.

It localises to the plastid. The protein localises to the chloroplast thylakoid membrane. The enzyme catalyses a plastoquinone + NADH + (n+1) H(+)(in) = a plastoquinol + NAD(+) + n H(+)(out). The catalysed reaction is a plastoquinone + NADPH + (n+1) H(+)(in) = a plastoquinol + NADP(+) + n H(+)(out). Functionally, NDH shuttles electrons from NAD(P)H:plastoquinone, via FMN and iron-sulfur (Fe-S) centers, to quinones in the photosynthetic chain and possibly in a chloroplast respiratory chain. The immediate electron acceptor for the enzyme in this species is believed to be plastoquinone. Couples the redox reaction to proton translocation, and thus conserves the redox energy in a proton gradient. The protein is NAD(P)H-quinone oxidoreductase subunit H, chloroplastic of Fagopyrum esculentum subsp. ancestrale (Wild buckwheat).